A 960-amino-acid polypeptide reads, in one-letter code: MHGHRVPGGPGPSDPERSAANTPGAAPLACADSDPGALEPGLPVSRGSGTALGGPLDPQFVGPSDASLGAPPSSRVLPCGPSPQHHRALRFSYHLEGSQPRPGLHQGNRILVKSLSLDPGQSLEPHPEGPQRLRSDPGPPTEIPGPRPSPLKRAPGPKPQVPPKPSYLQMPRVLPPPEPIPPPPSRPLPADPRVAKGLVPRAEASTSSAAVSSLIEKFEREPVIVASDRPAPGPCPVPPEPAMLPQPPPQPTGSQLPEGEASRCLFLLAPGPRDGEKVPNRDSGIDSISSPSNSEETCFVSDDGPPIHSLCPGPPALASMPVALADPHRPGSQEVDSDLEEEEEEEEEEKEREIPVPPMERQESVELTVQQKVFHIANELLQTEKAYVSRLHLLDQVFCARLLEEARNRSSFPADVVHGIFSNICSIYCFHQQFLLPELEKRMEEWDRYPRIGDILQKLAPFLKMYGEYVKNFDRAVELVNTWTERSTQFKVIIHEVQKEEACGNLTLQHHMLEPVQRIPRYELLLKDYLLKLPHGSPDSKDAQKSLELIATAAEHSNAAIRKMERMHKLLKVYELLGGEEDIVSPTKELIKEGHILKLSAKNGTTQDRYLILFNDRLLYCVPRLRLLGQKFSVRARIDVDGMELKESSNLNMPRTFLVSGKQRSLELQARTEEEKKDWVQAINSTLLKHEQTLETFKLLNSTNRDDEDTPPNSPNVDLGKRAPTPIREKEVTMCMRCQEPFNSITKRRHHCKACGHVVCGKCSEFRARLIYDNNRSNRVCTDCYVALHGAPGSSPACSQHTPQRRRSILEKQASVAAENSVICSFLHYMEKGGKGWHKAWFVVPENEPLVLYIYGAPQDVKAQRSLPLIGFEVGPPEAGERPDRRHVFKITQSHLSWYFSPETEELQRRWMAVLGRAGRGDTFCPGPTLSEDKEMEETPVAASGATAEPPEASQTRDKT.

Disordered stretches follow at residues 1–210 (MHGH…SSAA) and 226–355 (ASDR…REIP). At Ser48 the chain carries Phosphoserine. Residues 125–135 (PHPEGPQRLRS) are compositionally biased toward basic and acidic residues. 3 stretches are compositionally biased toward pro residues: residues 137–149 (PGPP…PRPS), 156–165 (GPKPQVPPKP), and 173–190 (VLPP…PLPA). The SH3-binding signature appears at 171 to 187 (PRVLPPPEPIPPPPSRP). Ser205 carries the post-translational modification Phosphoserine. Positions 231–251 (APGPCPVPPEPAMLPQPPPQP) are enriched in pro residues. Positions 273–284 (RDGEKVPNRDSG) are enriched in basic and acidic residues. Low complexity predominate over residues 285–294 (IDSISSPSNS). A compositionally biased stretch (acidic residues) spans 335 to 350 (VDSDLEEEEEEEEEEK). Residues 372-560 (KVFHIANELL…ATAAEHSNAA (189 aa)) enclose the DH domain. A PH 1 domain is found at 589–688 (ELIKEGHILK…WVQAINSTLL (100 aa)). Residues 701–725 (NSTNRDDEDTPPNSPNVDLGKRAPT) are disordered. Thr710 carries the phosphothreonine modification. Ser714 is subject to Phosphoserine. The FYVE-type zinc-finger motif lies at 729-789 (EKEVTMCMRC…VCTDCYVALH (61 aa)). The Zn(2+) site is built by Cys735, Cys738, Cys752, Cys755, Cys760, Cys763, Cys781, and Cys784. The 101-residue stretch at 820–920 (NSVICSFLHY…WMAVLGRAGR (101 aa)) folds into the PH 2 domain. Residues 922–960 (DTFCPGPTLSEDKEMEETPVAASGATAEPPEASQTRDKT) are disordered.

As to quaternary structure, interacts with DBNL/ABP1 and CTTN. Binds CDC42. May interact with CCPG1.

The protein localises to the cytoplasm. The protein resides in the cell projection. It is found in the lamellipodium. Its subcellular location is the ruffle. It localises to the cytoskeleton. Activates CDC42, a member of the Ras-like family of Rho- and Rac proteins, by exchanging bound GDP for free GTP. Plays a role in regulating the actin cytoskeleton and cell shape. The sequence is that of FYVE, RhoGEF and PH domain-containing protein 1 (Fgd1) from Mus musculus (Mouse).